An 846-amino-acid chain; its full sequence is Envelope glycoprotein gp160 (846 aa).

A signal peptide spans 1–31; it reads MRAREKERNCQNLWKWGIMLLGMLMTCSAAE. Residues 32–674 lie on the Extracellular side of the membrane; the sequence is DLWVTVYYGV…ITKWLWYIKL (643 aa). Cysteines 53 and 73 form a disulfide. N-linked (GlcNAc...) asparagine; by host glycosylation is found at asparagine 87, asparagine 129, asparagine 151, asparagine 179, asparagine 182, asparagine 229, asparagine 236, asparagine 257, asparagine 271, asparagine 284, and asparagine 290. Disulfide bonds link cysteine 118–cysteine 200, cysteine 125–cysteine 191, cysteine 130–cysteine 152, cysteine 213–cysteine 242, and cysteine 223–cysteine 234. The segment at 130 to 151 is V1; it reads CTDELRNSKGNGKVEEEEKRKN. Positions 152–191 are V2; it reads CSFNVRDKREQVYALFYKLDIVPIDNNNRTNSTNYRLINC. The tract at residues 291 to 327 is V3; it reads CTRPYKYTRQRTSIGLRQSLYTITGKKKKTGYIGQAH. Cysteine 291 and cysteine 328 are disulfide-bonded. The N-linked (GlcNAc...) asparagine; by host glycan is linked to asparagine 351. Positions 360-370 are CD4-binding loop; that stretch reads SSGGDPEITSH. 2 disulfide bridges follow: cysteine 374–cysteine 435 and cysteine 381–cysteine 408. The segment at 381–408 is V4; sequence CNTSRLFNSTWNQTNSTGFNNGTVTLPC. N-linked (GlcNAc...) asparagine; by host glycosylation is found at asparagine 382, asparagine 388, asparagine 392, asparagine 395, asparagine 401, asparagine 438, asparagine 451, and asparagine 452. V5 regions lie at residues 450 to 461 and 453 to 461; these read ANNSSHETIRPG and SSHETIRPG. Residues 502–522 are fusion peptide; the sequence is AIGLGAVFLGFLGAAGSTMGA. The segment at 564–582 is immunosuppression; it reads KQLQARVLAVERYLRDQQL. A disulfide bond links cysteine 588 and cysteine 594. Asparagine 601, asparagine 606, asparagine 615, and asparagine 627 each carry an N-linked (GlcNAc...) asparagine; by host glycan. Residues 623–657 adopt a coiled-coil conformation; the sequence is REIDNYTGLIYSLIEESQIQQEKNEKELLELDKWA. Positions 652–673 are MPER; binding to GalCer; the sequence is ELDKWASLWNWFSITKWLWYIK. A helical transmembrane segment spans residues 675 to 695; the sequence is FIMIVGGLIGLRIVFAVLSVV. Topologically, residues 696 to 846 are cytoplasmic; it reads NRVRQGYSPL…IRQGLERLLL (151 aa). Residues 702–705 carry the YXXL motif; contains endocytosis signal motif; sequence YSPL. 2 S-palmitoyl cysteine; by host lipidation sites follow: cysteine 754 and cysteine 827. The Di-leucine internalization motif motif lies at 845-846; sequence LL.

The protein belongs to the HIV-1 env protein family. As to quaternary structure, the mature envelope protein (Env) consists of a homotrimer of non-covalently associated gp120-gp41 heterodimers. The resulting complex protrudes from the virus surface as a spike. There seems to be as few as 10 spikes on the average virion. Interacts with host CD4, CCR5 and CXCR4. Gp120 also interacts with the C-type lectins CD209/DC-SIGN and CLEC4M/DC-SIGNR (collectively referred to as DC-SIGN(R)). Gp120 and gp41 interact with GalCer. Gp120 interacts with host ITGA4/ITGB7 complex; on CD4+ T-cells, this interaction results in rapid activation of integrin ITGAL/LFA-1, which facilitates efficient cell-to-cell spreading of HIV-1. Gp120 interacts with cell-associated heparan sulfate; this interaction increases virus infectivity on permissive cells and may be involved in infection of CD4- cells. The mature envelope protein (Env) consists of a homotrimer of non-covalently associated gp120-gp41 heterodimers. The resulting complex protrudes from the virus surface as a spike. There seems to be as few as 10 spikes on the average virion. In terms of processing, highly glycosylated by host. The high number of glycan on the protein is reffered to as 'glycan shield' because it contributes to hide protein sequence from adaptive immune system. Post-translationally, palmitoylation of the transmembrane protein and of Env polyprotein (prior to its proteolytic cleavage) is essential for their association with host cell membrane lipid rafts. Palmitoylation is therefore required for envelope trafficking to classical lipid rafts, but not for viral replication. Specific enzymatic cleavages in vivo yield mature proteins. Envelope glycoproteins are synthesized as an inactive precursor that is heavily N-glycosylated and processed likely by host cell furin in the Golgi to yield the mature SU and TM proteins. The cleavage site between SU and TM requires the minimal sequence [KR]-X-[KR]-R. About 2 of the 9 disulfide bonds of gp41 are reduced by P4HB/PDI, following binding to CD4 receptor.

The protein resides in the virion membrane. It localises to the host cell membrane. It is found in the host endosome membrane. In terms of biological role, oligomerizes in the host endoplasmic reticulum into predominantly trimers. In a second time, gp160 transits in the host Golgi, where glycosylation is completed. The precursor is then proteolytically cleaved in the trans-Golgi and thereby activated by cellular furin or furin-like proteases to produce gp120 and gp41. Its function is as follows. Attaches the virus to the host lymphoid cell by binding to the primary receptor CD4. This interaction induces a structural rearrangement creating a high affinity binding site for a chemokine coreceptor like CXCR4 and/or CCR5. Acts as a ligand for CD209/DC-SIGN and CLEC4M/DC-SIGNR, which are respectively found on dendritic cells (DCs), and on endothelial cells of liver sinusoids and lymph node sinuses. These interactions allow capture of viral particles at mucosal surfaces by these cells and subsequent transmission to permissive cells. HIV subverts the migration properties of dendritic cells to gain access to CD4+ T-cells in lymph nodes. Virus transmission to permissive T-cells occurs either in trans (without DCs infection, through viral capture and transmission), or in cis (following DCs productive infection, through the usual CD4-gp120 interaction), thereby inducing a robust infection. In trans infection, bound virions remain infectious over days and it is proposed that they are not degraded, but protected in non-lysosomal acidic organelles within the DCs close to the cell membrane thus contributing to the viral infectious potential during DCs' migration from the periphery to the lymphoid tissues. On arrival at lymphoid tissues, intact virions recycle back to DCs' cell surface allowing virus transmission to CD4+ T-cells. Functionally, acts as a class I viral fusion protein. Under the current model, the protein has at least 3 conformational states: pre-fusion native state, pre-hairpin intermediate state, and post-fusion hairpin state. During fusion of viral and target intracellular membranes, the coiled coil regions (heptad repeats) assume a trimer-of-hairpins structure, positioning the fusion peptide in close proximity to the C-terminal region of the ectodomain. The formation of this structure appears to drive apposition and subsequent fusion of viral and target cell membranes. Complete fusion occurs in host cell endosomes and is dynamin-dependent, however some lipid transfer might occur at the plasma membrane. The virus undergoes clathrin-dependent internalization long before endosomal fusion, thus minimizing the surface exposure of conserved viral epitopes during fusion and reducing the efficacy of inhibitors targeting these epitopes. Membranes fusion leads to delivery of the nucleocapsid into the cytoplasm. This chain is Envelope glycoprotein gp160, found in Human immunodeficiency virus type 1 group M subtype D (isolate NDK) (HIV-1).